The sequence spans 577 residues: Vacuolar membrane amino acid uptake transporter fnx2 (577 aa).

The segment covering 1–14 (MSNPRTKSPNTNRG) has biased composition (polar residues). Positions 1–80 (MSNPRTKSPN…SPHRQDAATT (80 aa)) are disordered. Residues 22 to 39 (SALLNDSLSSLNGNSSYD) show a composition bias toward low complexity. Positions 40–62 (SIKDSSKNNKDVAEVNEYPRRPE) are enriched in basic and acidic residues. 14 consecutive transmembrane segments (helical) span residues 91–111 (VLPALLLGVVLAALDNTIVAS), 123–145 (FSQVSWTATAYMISCTAFQPLFG), 157–177 (LLAAYCVFGIGCFLCGTSRSL), 186–206 (IAGIGGGGMNSTVSILMSDIV), 217–237 (IINVFFAIGSSLGGPVGGYFA), 244–264 (IGFLIQVPLIAIAFLCVYFTL), 286–306 (LILLIIGVTTMTCAFTLGGNV), 317–337 (LLIASSISYLSFVYVEAFVAF), 356–376 (LCNFFHSVANFGWIYGMPLFF), 391–411 (LIPMIIGSSLGSLLGGAVISL), 418–438 (ITVGSYFFGSVAALFMLRYGY), 448–468 (YPFSGGLGNGIAVTTTLVAII), 490–510 (GCVLGVSISSSIVQTVLGIKL), and 547–567 (LLGSIHYSFLFVSFMFFCAFV).

The protein belongs to the major facilitator superfamily.

It localises to the vacuole. It is found in the membrane. Its function is as follows. MFS-type transporter involved in vacuolar amino acid uptake. The protein is Vacuolar membrane amino acid uptake transporter fnx2 (fnx2) of Schizosaccharomyces pombe (strain 972 / ATCC 24843) (Fission yeast).